A 388-amino-acid polypeptide reads, in one-letter code: P2X purinoceptor 4 (388 aa).

Residues 1–33 (MAGCCSVLGSFLFEYDTPRIVLIRSRKVGLMNR) are Cytoplasmic-facing. Residues 34–54 (VVQLLILAYVIGWVFVWEKGY) form a helical membrane-spanning segment. Topologically, residues 55–338 (QETDSVVSSV…KFDIIPTMIN (284 aa)) are extracellular. Lys-67 and Lys-69 together coordinate ATP. Positions 67 and 69 each coordinate CTP. N-linked (GlcNAc...) asparagine glycosylation is found at Asn-75, Asn-110, Asn-131, Asn-153, and Asn-184. 3 disulfide bridges follow: Cys-116-Cys-165, Cys-126-Cys-149, and Cys-132-Cys-159. ATP-binding residues include Thr-186 and Leu-188. Thr-186 lines the CTP pocket. N-linked (GlcNAc...) asparagine glycans are attached at residues Asn-199 and Asn-208. 2 disulfides stabilise this stretch: Cys-217-Cys-227 and Cys-261-Cys-270. ATP contacts are provided by Asn-293, Arg-295, and Lys-313. CTP is bound by residues Asn-293, Arg-295, and Lys-313. A helical membrane pass occupies residues 339–359 (VGSGLALLGVATVLCDVIVLY). The Cytoplasmic portion of the chain corresponds to 360–388 (CMKKRYYYRDKKYKYVEDYEQGLSGEMNQ).

Belongs to the P2X receptor family. As to quaternary structure, functional P2RXs are organized as homomeric and heteromeric trimers. Functional P2XRs are organized as homomeric and heteromeric trimers. Forms heterotrimer with P2RX1. Interacts with P2RX7 (via C-terminus); this interaction is functional only in the presence of ATP. Forms heterotrimer with P2RX4; functional differences between homomeric P2RX4 and P2RX4/6 heterotrimer are minor. Interacts with AP1M2.

Its subcellular location is the cell membrane. It localises to the lysosome membrane. The catalysed reaction is K(+)(in) = K(+)(out). It carries out the reaction Na(+)(in) = Na(+)(out). The enzyme catalyses Ca(2+)(in) = Ca(2+)(out). With respect to regulation, activated by ATP. pH-dependent and inhibited by acidic pH. Functionally, ATP-gated nonselective transmembrane cation channel permeable to potassium, sodium and calcium. CTP, but not GTP or UTP, functions as a weak affinity agonist for P2RX4. Activated by extracellularly released ATP, it plays multiple role in immunity and central nervous system physiology. Plays a key role in initial steps of T-cell activation and Ca(2+) microdomain formation. Also participates in basal T-cell activity without TCR/CD3 stimulation. Promotes the differentiation and activation of Th17 cells via expression of retinoic acid-related orphan receptor C/RORC. Upon activation, drives microglia motility via the PI3K/Akt pathway. Could also function as an ATP-gated cation channel of lysosomal membranes. The sequence is that of P2X purinoceptor 4 (P2rx4) from Mus musculus (Mouse).